A 780-amino-acid chain; its full sequence is Translation initiation factor IF-2 (780 aa).

The tract at residues 24–194 (AEEKGFPVKN…KGAPERKNKA (171 aa)) is disordered. Polar residues-rich tracts occupy residues 59–71 (EQSA…QRKV) and 80–90 (QGTARTQTTAQ). Composition is skewed to low complexity over residues 98 to 114 (NQTQ…QTGN) and 132 to 158 (NNNT…SRNN). The span at 159 to 176 (RNNRRRNNNNNNRYKKNQ) shows a compositional bias: basic residues. Positions 177-194 (RIKDTNQHKGAPERKNKA) are enriched in basic and acidic residues. The region spanning 281 to 450 (PRAPVVTIMG…LLQSDVLELK (170 aa)) is the tr-type G domain. Positions 290–297 (GHVDHGKT) are G1. 290-297 (GHVDHGKT) lines the GTP pocket. The G2 stretch occupies residues 315–319 (GITQA). The G3 stretch occupies residues 336-339 (DTPG). GTP is bound by residues 336–340 (DTPGH) and 390–393 (NKID). A G4 region spans residues 390–393 (NKID). The G5 stretch occupies residues 426–428 (SAK).

This sequence belongs to the TRAFAC class translation factor GTPase superfamily. Classic translation factor GTPase family. IF-2 subfamily.

Its subcellular location is the cytoplasm. In terms of biological role, one of the essential components for the initiation of protein synthesis. Protects formylmethionyl-tRNA from spontaneous hydrolysis and promotes its binding to the 30S ribosomal subunits. Also involved in the hydrolysis of GTP during the formation of the 70S ribosomal complex. This chain is Translation initiation factor IF-2, found in Levilactobacillus brevis (strain ATCC 367 / BCRC 12310 / CIP 105137 / JCM 1170 / LMG 11437 / NCIMB 947 / NCTC 947) (Lactobacillus brevis).